An 82-amino-acid polypeptide reads, in one-letter code: MAFTLYSLLQAALLCVNAIAVLHEERFLKNIGWGTDQGIGGFGEEPGIKSQLMNLIRSVRTVMRVPLIIVNSIAIVLLLLFG.

Helical transmembrane passes span 2-22 and 62-82; these read AFTL…IAVL and VMRV…LLFG.

This sequence belongs to the YOS1 family.

The protein localises to the endoplasmic reticulum membrane. Regulator of endoplasmic reticulum secretion that acts as a key determinant of brain size. Required for secretion of extracellular matrix proteins. Required for correct brain development by depositing sufficient extracellular matrix proteins for tissue integrity and the proliferation of neural progenitors. Acts as a regulator of the unfolded protein response (UPR). The polypeptide is Immediate early response 3-interacting protein 1 (Bos taurus (Bovine)).